A 262-amino-acid chain; its full sequence is Ribosomal RNA small subunit methyltransferase A (262 aa).

The S-adenosyl-L-methionine site is built by Ile18, Gly43, Glu65, Asp91, and Asn110.

The protein belongs to the class I-like SAM-binding methyltransferase superfamily. rRNA adenine N(6)-methyltransferase family. RsmA subfamily.

Its subcellular location is the cytoplasm. It catalyses the reaction adenosine(1518)/adenosine(1519) in 16S rRNA + 4 S-adenosyl-L-methionine = N(6)-dimethyladenosine(1518)/N(6)-dimethyladenosine(1519) in 16S rRNA + 4 S-adenosyl-L-homocysteine + 4 H(+). Its function is as follows. Specifically dimethylates two adjacent adenosines (A1518 and A1519) in the loop of a conserved hairpin near the 3'-end of 16S rRNA in the 30S particle. May play a critical role in biogenesis of 30S subunits. The chain is Ribosomal RNA small subunit methyltransferase A from Ehrlichia ruminantium (strain Gardel).